A 104-amino-acid polypeptide reads, in one-letter code: ATP synthase subunit c (104 aa).

Transmembrane regions (helical) follow at residues 37 to 57 (LLGA…QGAV) and 83 to 103 (AGIA…LIFV).

It belongs to the ATPase C chain family. As to quaternary structure, F-type ATPases have 2 components, F(1) - the catalytic core - and F(0) - the membrane proton channel. F(1) has five subunits: alpha(3), beta(3), gamma(1), delta(1), epsilon(1). F(0) has three main subunits: a(1), b(2) and c(10-14). The alpha and beta chains form an alternating ring which encloses part of the gamma chain. F(1) is attached to F(0) by a central stalk formed by the gamma and epsilon chains, while a peripheral stalk is formed by the delta and b chains.

The protein localises to the cell membrane. Functionally, f(1)F(0) ATP synthase produces ATP from ADP in the presence of a proton or sodium gradient. F-type ATPases consist of two structural domains, F(1) containing the extramembraneous catalytic core and F(0) containing the membrane proton channel, linked together by a central stalk and a peripheral stalk. During catalysis, ATP synthesis in the catalytic domain of F(1) is coupled via a rotary mechanism of the central stalk subunits to proton translocation. In terms of biological role, key component of the F(0) channel; it plays a direct role in translocation across the membrane. A homomeric c-ring of between 10-14 subunits forms the central stalk rotor element with the F(1) delta and epsilon subunits. The polypeptide is ATP synthase subunit c (Mesoplasma florum (strain ATCC 33453 / NBRC 100688 / NCTC 11704 / L1) (Acholeplasma florum)).